The primary structure comprises 213 residues: Adenylate kinase (213 aa).

10 to 15 (GSGKGT) contributes to the ATP binding site. Residues 30–59 (SVGDLLRNIISSESKLGKGIKDTVESGNLI) form an NMP region. AMP contacts are provided by residues Arg36, 57 to 59 (NLI), 83 to 86 (GFPR), and Gln90. An LID region spans residues 125-160 (DRLTCLDCKSIYSISSFKNTTCAKCKSTRLEKRIDD). Position 126 (Arg126) interacts with ATP. Residues Cys129 and Cys132 each coordinate Zn(2+). 135–136 (IY) serves as a coordination point for ATP. Residues Cys146 and Cys149 each coordinate Zn(2+). Arg157 and Arg169 together coordinate AMP. Leu195 provides a ligand contact to ATP.

This sequence belongs to the adenylate kinase family. Monomer.

It localises to the cytoplasm. It catalyses the reaction AMP + ATP = 2 ADP. The protein operates within purine metabolism; AMP biosynthesis via salvage pathway; AMP from ADP: step 1/1. Its function is as follows. Catalyzes the reversible transfer of the terminal phosphate group between ATP and AMP. Plays an important role in cellular energy homeostasis and in adenine nucleotide metabolism. This is Adenylate kinase from Wolbachia pipientis subsp. Culex pipiens (strain wPip).